The sequence spans 325 residues: Foldase protein PrsA (325 aa).

Residues 1-20 (MKLMNKIIVPVTASALLLGA) form the signal peptide. Residue C21 is the site of N-palmitoyl cysteine attachment. C21 carries the S-diacylglycerol cysteine lipid modification. The PpiC domain maps to 139–245 (ENSKKTSHIL…YGYHIIKADK (107 aa)). Disordered regions lie at residues 159–200 (EGLS…SAKK) and 303–325 (PDKI…NSGS).

It belongs to the PrsA family.

The protein resides in the cell membrane. The enzyme catalyses [protein]-peptidylproline (omega=180) = [protein]-peptidylproline (omega=0). Its function is as follows. Plays a major role in protein secretion by helping the post-translocational extracellular folding of several secreted proteins. The sequence is that of Foldase protein PrsA from Staphylococcus epidermidis (strain ATCC 35984 / DSM 28319 / BCRC 17069 / CCUG 31568 / BM 3577 / RP62A).